A 183-amino-acid polypeptide reads, in one-letter code: Mast cell-expressed membrane protein 1 (183 aa).

The segment at 1-26 (MHASASQDKNRRKPGHDEGAHNPDYE) is disordered. Topologically, residues 1 to 70 (MHASASQDKN…PPWLYRTIMM (70 aa)) are cytoplasmic. The segment covering 15-24 (GHDEGAHNPD) has biased composition (basic and acidic residues). A helical; Signal-anchor for type II membrane protein transmembrane segment spans residues 71 to 91 (LYVLLALVFLSCIVLSALVLV). Residues 92–183 (KNSEMSKELW…EKKAQPQPST (92 aa)) are Extracellular-facing. N-linked (GlcNAc...) asparagine glycosylation is present at Asn109.

The protein localises to the membrane. This is Mast cell-expressed membrane protein 1 from Mus musculus (Mouse).